Reading from the N-terminus, the 378-residue chain is Sphingosine 1-phosphate receptor 3 (378 aa).

Over 1 to 40 (MATALPPRLQPVRGNETLREHYQYVGKLAGRLKEASEGST) the chain is Extracellular. The N-linked (GlcNAc...) asparagine glycan is linked to Asn-15. Residues 41-65 (LTTVLFLVICSFIVLENLMVLIAIW) traverse the membrane as a helical segment. Residues 66–72 (KNNKFHN) lie on the Cytoplasmic side of the membrane. Residues 73 to 101 (RMYFFIGNLALCDLLAGIAYKVNILMSGK) form a helical membrane-spanning segment. The Extracellular portion of the chain corresponds to 102-115 (KTFSLSPTVWFLRE). A helical transmembrane segment spans residues 116–134 (GSMFVALGASTCSLLAIAI). At 135–153 (ERHLTMIKMRPYDANKRHR) the chain is on the cytoplasmic side. A helical membrane pass occupies residues 154-179 (VFLLIGMCWLIAFTLGALPILGWNCL). The Extracellular portion of the chain corresponds to 180 to 195 (HNLPDCSTILPLYSKK). The chain crosses the membrane as a helical span at residues 196–216 (YIAFCISIFTAILVTIVILYA). The Cytoplasmic segment spans residues 217 to 243 (RIYFLVKSSSRKVANHNNSERSMALLR). Residues 244 to 265 (TVVIVVSVFIACWSPLFILFLI) form a helical membrane-spanning segment. The Extracellular segment spans residues 266–281 (DVACRVQACPILFKAQ). Residues 282–302 (WFIVLAVLNSAMNPVIYTLAS) traverse the membrane as a helical segment. Residues 303–378 (KEMRRAFFRL…AALQNGIFCN (76 aa)) are Cytoplasmic-facing. Position 326 is a phosphoserine (Ser-326). Residues 327 to 357 (PIQPALDPSRSKSSSSNNSSHSPKVKEDLPH) form a disordered region. Residues 337-348 (SKSSSSNNSSHS) show a composition bias toward low complexity.

It belongs to the G-protein coupled receptor 1 family. Expressed in all tissues, but most abundantly in heart, placenta, kidney, and liver.

The protein resides in the cell membrane. In terms of biological role, receptor for the lysosphingolipid sphingosine 1-phosphate (S1P). S1P is a bioactive lysophospholipid that elicits diverse physiological effect on most types of cells and tissues. When expressed in rat HTC4 hepatoma cells, is capable of mediating S1P-induced cell proliferation and suppression of apoptosis. The chain is Sphingosine 1-phosphate receptor 3 from Homo sapiens (Human).